We begin with the raw amino-acid sequence, 302 residues long: Deoxyribonuclease-1-like 1 (302 aa).

The first 18 residues, 1–18 (MHYPTALLFLILANGAQA), serve as a signal peptide directing secretion. Residues Glu97 and His148 contribute to the active site. Cys187 and Cys224 form a disulfide bridge. An N-linked (GlcNAc...) asparagine glycan is attached at Asn261.

The protein belongs to the DNase I family. In terms of tissue distribution, highest levels in skeletal and cardiac muscles. Detectable in all other tissues tested except brain.

The protein localises to the endoplasmic reticulum. The polypeptide is Deoxyribonuclease-1-like 1 (DNASE1L1) (Homo sapiens (Human)).